Here is a 582-residue protein sequence, read N- to C-terminus: Inactive metallocarboxypeptidase ECM14 (582 aa).

A signal peptide spans 1–20; sequence MHILQVITGATLVSVPFVSA. Positions 21–172 are excised as a propeptide; sequence IPSSTSEFLP…QAVYESYPQP (152 aa). The Peptidase M14 domain occupies 200–522; the sequence is DYQPLSVIIP…NAVLVFGQFL (323 aa). Zn(2+)-binding residues include H265 and E268. Substrate is bound by residues 265–268, R323, and 340–341; these read HARE and DR. The cysteines at positions 334 and 357 are disulfide-linked. 2 N-linked (GlcNAc...) asparagine glycosylation sites follow: N381 and N387. H397 provides a ligand contact to Zn(2+). 398–399 is a binding site for substrate; it reads SY. Positions 561–571 are enriched in acidic residues; the sequence is SNQLEDDDNEN. The interval 561–582 is disordered; the sequence is SNQLEDDDNENDTLLGFRTQKV. N-linked (GlcNAc...) asparagine glycosylation occurs at N571.

The protein belongs to the peptidase M14 family. Zn(2+) serves as cofactor.

It localises to the vacuole. It is found in the secreted. Inactive carboxypeptidase that may play a role in cell wall organization and biogenesis. In Coccidioides posadasii (strain RMSCC 757 / Silveira) (Valley fever fungus), this protein is Inactive metallocarboxypeptidase ECM14 (ECM14).